We begin with the raw amino-acid sequence, 169 residues long: Ribosome maturation factor RimM (169 aa).

The PRC barrel domain occupies 94–166; the sequence is EEGFYDHELE…TATITPPDGL (73 aa).

Belongs to the RimM family. In terms of assembly, binds ribosomal protein uS19.

The protein localises to the cytoplasm. An accessory protein needed during the final step in the assembly of 30S ribosomal subunit, possibly for assembly of the head region. Essential for efficient processing of 16S rRNA. May be needed both before and after RbfA during the maturation of 16S rRNA. It has affinity for free ribosomal 30S subunits but not for 70S ribosomes. The chain is Ribosome maturation factor RimM from Corynebacterium efficiens (strain DSM 44549 / YS-314 / AJ 12310 / JCM 11189 / NBRC 100395).